Reading from the N-terminus, the 844-residue chain is NADPH-Fe(3+) oxidoreductase subunit alpha (844 aa).

The 2Fe-2S ferredoxin-type domain occupies 1–78; sequence MVSLTIDGKD…GIKVTTQSEK (78 aa). Residues Cys-34, Cys-45, Cys-48, and Cys-62 each coordinate [2Fe-2S] cluster. A 4Fe-4S His(Cys)3-ligated-type domain is found at 78–117; it reads KLSRIRQKIMELMLVNHPLDCPVCDAGGECDLQNACYGLG. 15 residues coordinate [4Fe-4S] cluster: His-94, Cys-98, Cys-101, Cys-107, Cys-146, Cys-149, Cys-152, Cys-186, Cys-189, Cys-192, Cys-196, Cys-222, Cys-225, Cys-229, and Cys-256. 2 consecutive 4Fe-4S ferredoxin-type domains span residues 137-168 and 177-206; these read PLIE…IRVV and DTVD…SKPF. The 56-residue stretch at 215–270 folds into the 4Fe-4S Mo/W bis-MGD-type domain; it reads FTTTPSVCPFCATGCQIEYHSRNGRVERVTSDDSTYNSGNLCINGRFGYSYINSPD.

As to quaternary structure, heterotetramer with 2 beta subunits. Requires [4Fe-4S] cluster as cofactor.

It is found in the cell inner membrane. With respect to regulation, not regulated by FAD or FMN. Its function is as follows. The SfrAB enzymatic complex is probably involved in acetate metabolism and does not participate directly in the reduction of Fe(3+) chelates. May serve as a major route for NADP regeneration. The polypeptide is NADPH-Fe(3+) oxidoreductase subunit alpha (sfrA) (Geobacter sulfurreducens (strain DL-1 / KN400)).